A 242-amino-acid polypeptide reads, in one-letter code: MNAEKAPERHNVDHEEIAKFEAVASRWWDLEGEFKPLHRINPLRLGYIAERSGGLFGKKVLDVGCGGGILAESMAREGATVTGLDMGFEPLQVARLHALESGIEVEYVQETVEEHAAKHAQQYDVVTCMEMLEHVPDPQSVVHACAQLVKPGGEVFFSTLNRNGKSWLMAVVGAEYILRMVPKGTHDVKKFIKPAELLSWVDETILKEQHITGLHYNPITNTFKLGPGVDVNYMLHTRAKKA.

Residues arginine 44, glycine 64, aspartate 85, and methionine 129 each coordinate S-adenosyl-L-methionine.

Belongs to the methyltransferase superfamily. UbiG/COQ3 family.

The enzyme catalyses a 3-demethylubiquinol + S-adenosyl-L-methionine = a ubiquinol + S-adenosyl-L-homocysteine + H(+). It carries out the reaction a 3-(all-trans-polyprenyl)benzene-1,2-diol + S-adenosyl-L-methionine = a 2-methoxy-6-(all-trans-polyprenyl)phenol + S-adenosyl-L-homocysteine + H(+). It participates in cofactor biosynthesis; ubiquinone biosynthesis. O-methyltransferase that catalyzes the 2 O-methylation steps in the ubiquinone biosynthetic pathway. The polypeptide is Ubiquinone biosynthesis O-methyltransferase (Salmonella arizonae (strain ATCC BAA-731 / CDC346-86 / RSK2980)).